Reading from the N-terminus, the 60-residue chain is Large ribosomal subunit protein bL32 (60 aa).

This sequence belongs to the bacterial ribosomal protein bL32 family.

The sequence is that of Large ribosomal subunit protein bL32 from Clostridium acetobutylicum (strain ATCC 824 / DSM 792 / JCM 1419 / IAM 19013 / LMG 5710 / NBRC 13948 / NRRL B-527 / VKM B-1787 / 2291 / W).